Consider the following 78-residue polypeptide: Small integral membrane protein 5 (78 aa).

A helical transmembrane segment spans residues 32 to 52 (ILAFSVLVVFTATVVLLLLIA).

The protein localises to the membrane. The polypeptide is Small integral membrane protein 5 (SMIM5) (Bos taurus (Bovine)).